A 379-amino-acid chain; its full sequence is Putative zinc metalloprotease BMEI0829 (379 aa).

A Zn(2+)-binding site is contributed by H33. Residue E34 is part of the active site. H37 is a binding site for Zn(2+). 4 helical membrane-spanning segments follow: residues 39-61, 122-144, 305-327, and 355-377; these read LVAR…ELLG, VFAG…FALY, FDWL…LFPL, and IFYR…NDLF. The region spanning 133–208 is the PDZ domain; the sequence is TIAIFSVFFA…LNFTVERDGK (76 aa).

Belongs to the peptidase M50B family. Zn(2+) serves as cofactor.

The protein resides in the cell inner membrane. This Brucella melitensis biotype 1 (strain ATCC 23456 / CCUG 17765 / NCTC 10094 / 16M) protein is Putative zinc metalloprotease BMEI0829.